The sequence spans 20 residues: METTNESLGYTDQIIGPVLD.

Positions Met1–Tyr10 are enriched in polar residues. Residues Met1–Asp20 are disordered.

It belongs to the ATPase alpha/beta chains family. In terms of assembly, F-type ATPases have 2 components, CF(1) - the catalytic core - and CF(0) - the membrane proton channel. CF(1) has five subunits: alpha(3), beta(3), gamma(1), delta(1), epsilon(1). CF(0) has four main subunits: a(1), b(1), b'(1) and c(9-12).

It is found in the plastid. Its subcellular location is the chloroplast thylakoid membrane. The enzyme catalyses ATP + H2O + 4 H(+)(in) = ADP + phosphate + 5 H(+)(out). Produces ATP from ADP in the presence of a proton gradient across the membrane. The catalytic sites are hosted primarily by the beta subunits. The protein is ATP synthase subunit beta, chloroplastic of Chattonella marina var. antiqua (Red tide flagellate).